The primary structure comprises 316 residues: uncharacterized protein (316 aa).

T126 lines the substrate pocket. Catalysis depends on Y149, which acts as the Proton acceptor.

Belongs to the NAD(P)-dependent epimerase/dehydratase family.

This is an uncharacterized protein from Bacillus subtilis (strain 168).